A 223-amino-acid polypeptide reads, in one-letter code: Holliday junction branch migration complex subunit RuvA (223 aa).

The segment at 1–64 is domain I; the sequence is MIGKLTGRLD…EDLLQLFGFL (64 aa). Residues 65–143 form a domain II region; sequence SPYEKEWHRL…AVMAMGGTLD (79 aa). The segment at 144-171 is flexible linker; sequence DAMDDVVDDMPGESAAPAPAPQPRAPKR. Positions 148–177 are disordered; that stretch reads DVVDDMPGESAAPAPAPQPRAPKRPASNAQ. The segment at 172 to 223 is domain III; it reads PASNAQAEALSALQNLGYGPSDAAQAVAQAAESASNTPELIRAALRLLAPKE.

This sequence belongs to the RuvA family. As to quaternary structure, homotetramer. Forms an RuvA(8)-RuvB(12)-Holliday junction (HJ) complex. HJ DNA is sandwiched between 2 RuvA tetramers; dsDNA enters through RuvA and exits via RuvB. An RuvB hexamer assembles on each DNA strand where it exits the tetramer. Each RuvB hexamer is contacted by two RuvA subunits (via domain III) on 2 adjacent RuvB subunits; this complex drives branch migration. In the full resolvosome a probable DNA-RuvA(4)-RuvB(12)-RuvC(2) complex forms which resolves the HJ.

It localises to the cytoplasm. In terms of biological role, the RuvA-RuvB-RuvC complex processes Holliday junction (HJ) DNA during genetic recombination and DNA repair, while the RuvA-RuvB complex plays an important role in the rescue of blocked DNA replication forks via replication fork reversal (RFR). RuvA specifically binds to HJ cruciform DNA, conferring on it an open structure. The RuvB hexamer acts as an ATP-dependent pump, pulling dsDNA into and through the RuvAB complex. HJ branch migration allows RuvC to scan DNA until it finds its consensus sequence, where it cleaves and resolves the cruciform DNA. The protein is Holliday junction branch migration complex subunit RuvA of Jannaschia sp. (strain CCS1).